The chain runs to 173 residues: Aliphatic sulfonate oxidoreductase, polyferredoxin-like subunit (173 aa).

4Fe-4S ferredoxin-type domains are found at residues isoleucine 9–alanine 40, leucine 48–lysine 80, and glycine 82–glycine 111. The [4Fe-4S] cluster site is built by cysteine 18, cysteine 21, cysteine 24, cysteine 28, cysteine 58, cysteine 61, cysteine 66, cysteine 70, cysteine 91, cysteine 94, cysteine 97, cysteine 101, cysteine 118, cysteine 121, cysteine 127, and cysteine 131.

Heterodimer composed of a small WOR5-S subunit, with four [4Fe-4S] clusters, and a large WOR5-L subunit, containing the active site tungsto-bispyranopterin cofactor as well as another [4Fe-4S] cluster. It depends on [4Fe-4S] cluster as a cofactor.

The protein localises to the cytoplasm. In terms of biological role, polyferredoxin-like subunit of an oxidoreductase that can desulfonate and oxidize aliphatic sulfonates such as taurine. May serve as a an electron-transfer subunit between the catalytic subunit and ferredoxin. This is Aliphatic sulfonate oxidoreductase, polyferredoxin-like subunit from Pyrococcus furiosus (strain ATCC 43587 / DSM 3638 / JCM 8422 / Vc1).